The chain runs to 227 residues: ATP synthase F(0) complex subunit a (227 aa).

The next 6 helical transmembrane spans lie at 14–34 (YLGI…FPLP), 69–89 (WALL…LGLL), 98–118 (QLSL…IIGL), 132–152 (EGTP…SLFI), 179–199 (VFVL…VLFL), and 202–222 (LLEV…LSLY).

Belongs to the ATPase A chain family. In terms of assembly, component of the ATP synthase complex composed at least of ATP5F1A/subunit alpha, ATP5F1B/subunit beta, ATP5MC1/subunit c (homooctomer), MT-ATP6/subunit a, MT-ATP8/subunit 8, ATP5ME/subunit e, ATP5MF/subunit f, ATP5MG/subunit g, ATP5MK/subunit k, ATP5MJ/subunit j, ATP5F1C/subunit gamma, ATP5F1D/subunit delta, ATP5F1E/subunit epsilon, ATP5PF/subunit F6, ATP5PB/subunit b, ATP5PD/subunit d, ATP5PO/subunit OSCP. ATP synthase complex consists of a soluble F(1) head domain (subunits alpha(3) and beta(3)) - the catalytic core - and a membrane F(0) domain - the membrane proton channel (subunits c, a, 8, e, f, g, k and j). These two domains are linked by a central stalk (subunits gamma, delta, and epsilon) rotating inside the F1 region and a stationary peripheral stalk (subunits F6, b, d, and OSCP). Interacts with DNAJC30; interaction is direct.

It is found in the mitochondrion inner membrane. The catalysed reaction is H(+)(in) = H(+)(out). Functionally, subunit a, of the mitochondrial membrane ATP synthase complex (F(1)F(0) ATP synthase or Complex V) that produces ATP from ADP in the presence of a proton gradient across the membrane which is generated by electron transport complexes of the respiratory chain. ATP synthase complex consist of a soluble F(1) head domain - the catalytic core - and a membrane F(1) domain - the membrane proton channel. These two domains are linked by a central stalk rotating inside the F(1) region and a stationary peripheral stalk. During catalysis, ATP synthesis in the catalytic domain of F(1) is coupled via a rotary mechanism of the central stalk subunits to proton translocation. With the subunit c (ATP5MC1), forms the proton-conducting channel in the F(0) domain, that contains two crucial half-channels (inlet and outlet) that facilitate proton movement from the mitochondrial intermembrane space (IMS) into the matrix. Protons are taken up via the inlet half-channel and released through the outlet half-channel, following a Grotthuss mechanism. The protein is ATP synthase F(0) complex subunit a of Formosania lacustris (Oriental stream loach).